Consider the following 687-residue polypeptide: Glycine--tRNA ligase beta subunit (687 aa).

Belongs to the class-II aminoacyl-tRNA synthetase family. As to quaternary structure, tetramer of two alpha and two beta subunits.

Its subcellular location is the cytoplasm. It catalyses the reaction tRNA(Gly) + glycine + ATP = glycyl-tRNA(Gly) + AMP + diphosphate. The protein is Glycine--tRNA ligase beta subunit of Neisseria meningitidis serogroup C (strain 053442).